The primary structure comprises 333 residues: Gap junction alpha-4 protein (333 aa).

At 1-20 (MGDWGFLEKLLDQVQEHSTV) the chain is on the cytoplasmic side. Residues 21–40 (VGKIWLTVLFIFRILILGLA) form a helical membrane-spanning segment. Residues 41–76 (GESVWGDEQSDFECNTAQPGCTNVCYDQAFPISHIR) lie on the Extracellular side of the membrane. A helical transmembrane segment spans residues 77-99 (YWVLQFLFVSTPTLVYLGHVIYL). Residues 100–148 (SRREERLRQKEGELRALPAKDPRVERALASIERQMAKISVAEDGHLRIR) lie on the Cytoplasmic side of the membrane. Residues 149–165 (GALMGTYVASVLCKSVL) form a helical membrane-spanning segment. Over 166-207 (EAGFLYGQWRLYGWTMEPVFVCQRSPCPYLVDCFVSRPTEKT) the chain is Extracellular. The helical transmembrane segment at 208–230 (IFIIFMLVVGLISLVLNLLELAY) threads the bilayer. Topologically, residues 231 to 333 (LLCRCLSRGV…SSSASKKQYV (103 aa)) are cytoplasmic. Residues 303 to 333 (SRAPLFLDPPPQTGRKSPSRPSSSASKKQYV) are disordered. Over residues 317–333 (RKSPSRPSSSASKKQYV) the composition is skewed to low complexity.

This sequence belongs to the connexin family. Alpha-type (group II) subfamily. In terms of assembly, a connexon is composed of a hexamer of connexins.

Its subcellular location is the cell membrane. It is found in the cell junction. The protein localises to the gap junction. One gap junction consists of a cluster of closely packed pairs of transmembrane channels, the connexons, through which materials of low MW diffuse from one cell to a neighboring cell. This is Gap junction alpha-4 protein (GJA4) from Bos taurus (Bovine).